Consider the following 425-residue polypeptide: UPF0761 membrane protein XCV0968 (425 aa).

6 helical membrane passes run 48 to 68 (VFAL…FPAF), 105 to 125 (FTVA…HSIE), 154 to 174 (GTML…LPLF), 182 to 202 (LAEF…IVLI), 216 to 236 (ALPG…GFGF), and 250 to 270 (ALSA…SVLL).

Belongs to the UPF0761 family.

It is found in the cell inner membrane. This chain is UPF0761 membrane protein XCV0968, found in Xanthomonas euvesicatoria pv. vesicatoria (strain 85-10) (Xanthomonas campestris pv. vesicatoria).